The following is a 564-amino-acid chain: MGKKYVIGIDYGTESGRAVLVDLEGNEIADHVTPYPHGVIDEVLPESNVQLEPDWALQHPGDYIEVLATAVPAVLQKSGVNPADVIGVGIDFTACTMLPIAGSGEPLCLKPEFKHRPHSWVKLWKHHAAQDEANLLNEMAAKRGEAFLPRYGGKISSEWMIAKIWQILNEDPDIYDQTDLFLEATDWVIFKMTGQLVRNSCTAGYKSIWHKQDGYPSKEFFRALDPRLEHVTETKLRGSIVPLGTRAGVLTKEMAAMMGLLPGTAVAVGNVDAHAAVPGVGVVEPGKMVMAMGTSICHMLLGTEEKYVEGMCGVVEDGIIPGYFGYEAGQSAVGDIFAWYVEQSVPAYVKEAAEKEGVSVHEWLEKRAAAYRPGETGLLALDWWNGNRSVLVDTDLTGLIIGYTLLTKPEEIYRALLEATAFGTRKIIDAFVESGINVDELYACGGLPQKNKLLMQIYADVTNREIKIAASKQTPAVGAAMFAAVAAGKENGGYESIIEAARNMGKVREETFKPIPENVAIYEQLYQEYTKLHDYFGRGENDVMKRLKHWKETARAVKESISLS.

Belongs to the ribulokinase family.

It carries out the reaction D-ribulose + ATP = D-ribulose 5-phosphate + ADP + H(+). The catalysed reaction is L-ribulose + ATP = L-ribulose 5-phosphate + ADP + H(+). Its pathway is carbohydrate degradation; L-arabinose degradation via L-ribulose; D-xylulose 5-phosphate from L-arabinose (bacterial route): step 2/3. This Anoxybacillus flavithermus (strain DSM 21510 / WK1) protein is Ribulokinase.